Reading from the N-terminus, the 577-residue chain is Arginine--tRNA ligase (577 aa).

A 'HIGH' region motif is present at residues 122–132 (PNVAKEMHVGH).

It belongs to the class-I aminoacyl-tRNA synthetase family. As to quaternary structure, monomer.

The protein resides in the cytoplasm. It carries out the reaction tRNA(Arg) + L-arginine + ATP = L-arginyl-tRNA(Arg) + AMP + diphosphate. In Histophilus somni (strain 129Pt) (Haemophilus somnus), this protein is Arginine--tRNA ligase.